We begin with the raw amino-acid sequence, 204 residues long: ATP synthase subunit b 2 (204 aa).

Residues 50 to 70 (IFWLAVTFGLLLFLMSKVALP) traverse the membrane as a helical segment.

The protein belongs to the ATPase B chain family. F-type ATPases have 2 components, F(1) - the catalytic core - and F(0) - the membrane proton channel. F(1) has five subunits: alpha(3), beta(3), gamma(1), delta(1), epsilon(1). F(0) has three main subunits: a(1), b(2) and c(10-14). The alpha and beta chains form an alternating ring which encloses part of the gamma chain. F(1) is attached to F(0) by a central stalk formed by the gamma and epsilon chains, while a peripheral stalk is formed by the delta and b chains.

The protein localises to the cell inner membrane. In terms of biological role, f(1)F(0) ATP synthase produces ATP from ADP in the presence of a proton or sodium gradient. F-type ATPases consist of two structural domains, F(1) containing the extramembraneous catalytic core and F(0) containing the membrane proton channel, linked together by a central stalk and a peripheral stalk. During catalysis, ATP synthesis in the catalytic domain of F(1) is coupled via a rotary mechanism of the central stalk subunits to proton translocation. Functionally, component of the F(0) channel, it forms part of the peripheral stalk, linking F(1) to F(0). The b'-subunit is a diverged and duplicated form of b found in plants and photosynthetic bacteria. This is ATP synthase subunit b 2 (atpF2) from Rhodospirillum centenum (strain ATCC 51521 / SW).